The following is a 211-amino-acid chain: Protein-L-isoaspartate O-methyltransferase (211 aa).

S62 is an active-site residue.

Belongs to the methyltransferase superfamily. L-isoaspartyl/D-aspartyl protein methyltransferase family.

Its subcellular location is the cytoplasm. It carries out the reaction [protein]-L-isoaspartate + S-adenosyl-L-methionine = [protein]-L-isoaspartate alpha-methyl ester + S-adenosyl-L-homocysteine. Functionally, catalyzes the methyl esterification of L-isoaspartyl residues in peptides and proteins that result from spontaneous decomposition of normal L-aspartyl and L-asparaginyl residues. It plays a role in the repair and/or degradation of damaged proteins. This chain is Protein-L-isoaspartate O-methyltransferase, found in Shewanella denitrificans (strain OS217 / ATCC BAA-1090 / DSM 15013).